A 309-amino-acid polypeptide reads, in one-letter code: tRNA dimethylallyltransferase (309 aa).

10–17 (GPTAVGKT) provides a ligand contact to ATP. Position 12–17 (12–17 (TAVGKT)) interacts with substrate. An interaction with substrate tRNA region spans residues 35–38 (DSMQ).

This sequence belongs to the IPP transferase family. Monomer. Mg(2+) serves as cofactor.

The enzyme catalyses adenosine(37) in tRNA + dimethylallyl diphosphate = N(6)-dimethylallyladenosine(37) in tRNA + diphosphate. Its function is as follows. Catalyzes the transfer of a dimethylallyl group onto the adenine at position 37 in tRNAs that read codons beginning with uridine, leading to the formation of N6-(dimethylallyl)adenosine (i(6)A). In Clostridium botulinum (strain Alaska E43 / Type E3), this protein is tRNA dimethylallyltransferase.